A 467-amino-acid polypeptide reads, in one-letter code: Asparagine--tRNA ligase (467 aa).

The protein belongs to the class-II aminoacyl-tRNA synthetase family. As to quaternary structure, homodimer.

The protein resides in the cytoplasm. The catalysed reaction is tRNA(Asn) + L-asparagine + ATP = L-asparaginyl-tRNA(Asn) + AMP + diphosphate + H(+). The sequence is that of Asparagine--tRNA ligase from Legionella pneumophila (strain Paris).